The following is a 163-amino-acid chain: Crossover junction endodeoxyribonuclease RuvC (163 aa).

Residues D4, E65, and D138 contribute to the active site. Mg(2+)-binding residues include D4, E65, and D138.

This sequence belongs to the RuvC family. As to quaternary structure, homodimer which binds Holliday junction (HJ) DNA. The HJ becomes 2-fold symmetrical on binding to RuvC with unstacked arms; it has a different conformation from HJ DNA in complex with RuvA. In the full resolvosome a probable DNA-RuvA(4)-RuvB(12)-RuvC(2) complex forms which resolves the HJ. Mg(2+) is required as a cofactor.

It is found in the cytoplasm. The enzyme catalyses Endonucleolytic cleavage at a junction such as a reciprocal single-stranded crossover between two homologous DNA duplexes (Holliday junction).. In terms of biological role, the RuvA-RuvB-RuvC complex processes Holliday junction (HJ) DNA during genetic recombination and DNA repair. Endonuclease that resolves HJ intermediates. Cleaves cruciform DNA by making single-stranded nicks across the HJ at symmetrical positions within the homologous arms, yielding a 5'-phosphate and a 3'-hydroxyl group; requires a central core of homology in the junction. The consensus cleavage sequence is 5'-(A/T)TT(C/G)-3'. Cleavage occurs on the 3'-side of the TT dinucleotide at the point of strand exchange. HJ branch migration catalyzed by RuvA-RuvB allows RuvC to scan DNA until it finds its consensus sequence, where it cleaves and resolves the cruciform DNA. This Corynebacterium diphtheriae (strain ATCC 700971 / NCTC 13129 / Biotype gravis) protein is Crossover junction endodeoxyribonuclease RuvC.